Reading from the N-terminus, the 88-residue chain is Large ribosomal subunit protein eL34 (88 aa).

The disordered stretch occupies residues 41 to 72; it reads RPLNGIPRGRPNELRKLPKTKKRPERPMPNLC.

This sequence belongs to the eukaryotic ribosomal protein eL34 family.

The chain is Large ribosomal subunit protein eL34 from Thermococcus sibiricus (strain DSM 12597 / MM 739).